The chain runs to 370 residues: Binary larvicide subunit BinA (370 aa).

A propeptide spanning residues 1 to 6 is cleaved from the precursor; sequence MRNLDF. A beta-trefoil domain region spans residues 1–155; that stretch reads MRNLDFIDSF…LISNKEQIYL (155 aa). A disulfide bridge connects residues C31 and C47. The interval 156-370 is pore-forming domain; that stretch reads TLPSLPENEQ…NTKIITDDQN (215 aa).

The protein belongs to the toxin_10 family. As to quaternary structure, forms a heterodimer with BinB. Post-translationally, processed by proteases in the mosquito gut, probably at both the N- and C-termini.

Its subcellular location is the spore. It is found in the perispore. Component of a binary toxin active against Culex and some Aedes mosquito larvae. The individual subunits are not toxic. BinAB binds to the gastric caecum and posterior midgut of C.quinquefasciatus larvae; this subunit alone binds the entire larval gut. Binary toxin internalization into host gut cells requires both proteins. Toxic to Aedes atropalpus mosquito larvae; mortality towards both C.quinquefasciatus and A.atropalpus is maximal by 48 hours. A.aegypti is not very susceptible to this toxin. This is Binary larvicide subunit BinA (binA) from Lysinibacillus sphaericus (Bacillus sphaericus).